The chain runs to 264 residues: Small ribosomal subunit protein uS2 (264 aa).

Residues 228–264 form a disordered region; the sequence is QLDAEDDYEDYDGSEYDDDYEETEYTDAVIPDEETEE. Positions 230–264 are enriched in acidic residues; that stretch reads DAEDDYEDYDGSEYDDDYEETEYTDAVIPDEETEE.

This sequence belongs to the universal ribosomal protein uS2 family.

This is Small ribosomal subunit protein uS2 from Nostoc punctiforme (strain ATCC 29133 / PCC 73102).